The following is a 489-amino-acid chain: Bypass of stop codon protein 5 (489 aa).

The interval M1–E42 is disordered. A compositionally biased stretch (low complexity) spans S18–F30. Residues S111 and S350 each carry the phosphoserine modification.

Belongs to the BUL1 family.

Its function is as follows. Appears to play a role in translation fidelity, and may act when translation is compromised. May be a component of the ubiquitination pathway. The sequence is that of Bypass of stop codon protein 5 (BSC5) from Saccharomyces cerevisiae (strain ATCC 204508 / S288c) (Baker's yeast).